A 212-amino-acid chain; its full sequence is Ribonuclease HII (212 aa).

Residues 17 to 206 (RVIAGVDEAG…KSTKPQSLQT (190 aa)) form the RNase H type-2 domain. 3 residues coordinate a divalent metal cation: aspartate 23, glutamate 24, and aspartate 115.

It belongs to the RNase HII family. Requires Mn(2+) as cofactor. It depends on Mg(2+) as a cofactor.

The protein localises to the cytoplasm. The catalysed reaction is Endonucleolytic cleavage to 5'-phosphomonoester.. Its function is as follows. Endonuclease that specifically degrades the RNA of RNA-DNA hybrids. This Syntrophus aciditrophicus (strain SB) protein is Ribonuclease HII.